The chain runs to 355 residues: UDP-N-acetylglucosamine--N-acetylmuramyl-(pentapeptide) pyrophosphoryl-undecaprenol N-acetylglucosamine transferase (355 aa).

Residues 13–15, asparagine 125, arginine 162, serine 190, isoleucine 244, and glutamine 289 each bind UDP-N-acetyl-alpha-D-glucosamine; that span reads TGG.

The protein belongs to the glycosyltransferase 28 family. MurG subfamily.

It is found in the cell inner membrane. It carries out the reaction di-trans,octa-cis-undecaprenyl diphospho-N-acetyl-alpha-D-muramoyl-L-alanyl-D-glutamyl-meso-2,6-diaminopimeloyl-D-alanyl-D-alanine + UDP-N-acetyl-alpha-D-glucosamine = di-trans,octa-cis-undecaprenyl diphospho-[N-acetyl-alpha-D-glucosaminyl-(1-&gt;4)]-N-acetyl-alpha-D-muramoyl-L-alanyl-D-glutamyl-meso-2,6-diaminopimeloyl-D-alanyl-D-alanine + UDP + H(+). The protein operates within cell wall biogenesis; peptidoglycan biosynthesis. Its function is as follows. Cell wall formation. Catalyzes the transfer of a GlcNAc subunit on undecaprenyl-pyrophosphoryl-MurNAc-pentapeptide (lipid intermediate I) to form undecaprenyl-pyrophosphoryl-MurNAc-(pentapeptide)GlcNAc (lipid intermediate II). This is UDP-N-acetylglucosamine--N-acetylmuramyl-(pentapeptide) pyrophosphoryl-undecaprenol N-acetylglucosamine transferase from Neisseria meningitidis serogroup A / serotype 4A (strain DSM 15465 / Z2491).